We begin with the raw amino-acid sequence, 337 residues long: tRNA N6-adenosine threonylcarbamoyltransferase (337 aa).

Fe cation-binding residues include His110 and His114. Substrate contacts are provided by residues 133-137 (MVSGG), Asp166, Gly179, Asp183, and Asn276. Residue Asp302 coordinates Fe cation.

Belongs to the KAE1 / TsaD family. It depends on Fe(2+) as a cofactor.

The protein resides in the cytoplasm. The catalysed reaction is L-threonylcarbamoyladenylate + adenosine(37) in tRNA = N(6)-L-threonylcarbamoyladenosine(37) in tRNA + AMP + H(+). In terms of biological role, required for the formation of a threonylcarbamoyl group on adenosine at position 37 (t(6)A37) in tRNAs that read codons beginning with adenine. Is involved in the transfer of the threonylcarbamoyl moiety of threonylcarbamoyl-AMP (TC-AMP) to the N6 group of A37, together with TsaE and TsaB. TsaD likely plays a direct catalytic role in this reaction. In Fervidobacterium nodosum (strain ATCC 35602 / DSM 5306 / Rt17-B1), this protein is tRNA N6-adenosine threonylcarbamoyltransferase.